A 188-amino-acid chain; its full sequence is MEMMEEGVPDVINLSYLAEREETELEKRVAEIIKELGAERLMYCMQCGACASICPLARVGFEWYNKKLIKALILGLRDELLDDPTPWACVACNRCTEICPRRVSPFEVMFAMRRLMAEEYAIGSLAIEGLRSLYEYGHAVYMAGREARKKVGLPEKPPSTESDPKALEDLRKILKQTKLAELGLVPME.

2 consecutive 4Fe-4S ferredoxin-type domains span residues 34–64 (KELG…FEWY) and 78–109 (DELL…FEVM). Residues cysteine 44, cysteine 47, cysteine 50, cysteine 54, cysteine 89, cysteine 92, cysteine 95, and cysteine 99 each coordinate [4Fe-4S] cluster.

Belongs to the HdrC family. In terms of assembly, the heterodisulfide reductase is composed of three subunits; HdlA, HdlB and HdlC. It forms a complex with the F420-non-reducing hydrogenase (Mvh), which provides the reducing equivalents to the heterodisulfide reductase.

The protein localises to the cytoplasm. Its function is as follows. Has oxidoreductase activity. The Hdl and Mvh subunits may together mediate electron transfer from hydrogen to an unidentified electron acceptor on the cytoplasmic side of the membrane. The polypeptide is Heterodisulfide reductase subunit C-like protein (hdlC) (Archaeoglobus profundus (strain DSM 5631 / JCM 9629 / NBRC 100127 / Av18)).